A 368-amino-acid polypeptide reads, in one-letter code: MIGWGDVYKVVAAMAPLYFALGLGYGSVRWWRLFTADQCDAVNRLVACFAVPFFAFDFAARIDPFALSYRVLAADALSKLAVALALAACAAAASTRCCGSGGGKRGGGGGFSWCITGFSLATLNNTLVVGVPLLDAMYGKWARDLIVQISVVQTIVYFPLLLLAFEVRRATTAAAAPPPPPTGTDDDDVEDGAAAAATAAAARRSLWPLVRAVWLKVARNPNVYAGVLGVAWACVTNRWHVETPSIIEGSVLIMSKTGVGLSMFSMGLFMALQDKIIVCGAGLTVLGMALRFVAGPAATAVGAFALGLRGDLLRLAIIQAALPQSITTFVFAKEYGLHAEILSTAVIFGTLASLPVLIVYYIVLGFIR.

10 helical membrane passes run 7-27 (VYKV…GYGS), 39-59 (CDAV…FDFA), 71-91 (VLAA…ACAA), 114-134 (CITG…VPLL), 145-165 (LIVQ…LLAF), 227-247 (VLGV…PSII), 251-271 (VLIM…LFMA), 286-306 (LGMA…AFAL), 312-332 (LLRL…FVFA), and 347-367 (IFGT…LGFI).

The protein belongs to the auxin efflux carrier (TC 2.A.69.1) family. As to expression, expressed at low levels in roots and shoot apex.

It is found in the membrane. May act as a component of the auxin efflux carrier. This is Probable auxin efflux carrier component 5b from Oryza sativa subsp. japonica (Rice).